The chain runs to 354 residues: Guanine nucleotide-binding protein G(i) subunit alpha-3 (354 aa).

G2 carries N-myristoyl glycine lipidation. C3 carries the S-palmitoyl cysteine lipid modification. The 323-residue stretch at K32 to Y354 folds into the G-alpha domain. Residues K35–T48 are G1 motif. G42, E43, S44, G45, K46, S47, T48, D150, S151, L175, R176, T177, R178, V179, K180, T181, V201, and G203 together coordinate GTP. Positions 43, 44, 45, 46, 47, and 48 each coordinate GDP. Residue S47 participates in Mg(2+) binding. GDP is bound by residues S151, L175, R176, T177, and R178. The interval D173–T181 is G2 motif. ADP-ribosylarginine; by cholera toxin is present on R178. T181 serves as a coordination point for Mg(2+). A G3 motif region spans residues F196–R205. Q204 carries the deamidated glutamine; by Photorhabdus PAU_02230 modification. Residues I265–D272 are G4 motif. Positions 269, 270, 272, 273, 325, 326, and 327 each coordinate GTP. N269, K270, and D272 together coordinate GDP. Positions T324–T329 are G5 motif. The GDP site is built by C325 and A326. The residue at position 351 (C351) is an ADP-ribosylcysteine; by pertussis toxin.

Belongs to the G-alpha family. G(i/o/t/z) subfamily. Heterotrimeric G proteins are composed of 3 units; alpha, beta and gamma. The alpha subunit contains the guanine nucleotide binding site. GTP binding causes dissociation of the heterotrimer, liberating the individual subunits so that they can interact with downstream effector proteins. Forms a complex with CCDC88A/GIV and EGFR which leads to enhanced EGFR signaling and triggering of cell migration; ligand stimulation is required for recruitment of GNAI3 to the complex. Interacts (inactive GDP-bound form) with CCDC88A/GIV (via GBA motif); the interaction leads to activation of GNAI3. Interacts (inactive GDP-bound form) with CCDC88C/DAPLE (via GBA motif); the interaction leads to activation of GNAI3. Interacts (inactive GDP-bound form) with NUCB1 (via GBA motif) and NUCB2 (via GBA motif); the interaction leads to activation of GNAI3. Interacts (inactive GDP-bound form) with PLCD4 (via GBA motif); the interaction leads to activation of GNAI3. Interacts with INSR; the interaction is probably mediated by CCDC88A/GIV. Interacts with GPSM1. Interacts (GDP-bound form) with GPSM2 (via GoLoco domains). Does not interact with RGS2. Interacts with RGS8 and RGS10; this strongly enhances the intrinsic GTPase activity. Interacts with RGS16; this strongly enhances the intrinsic GTPase activity. Interacts with RGS12. Interacts (via active GTP- or inactive GDP-bound form) with RGS14. Interacts (via active GTP-bound form) with TRPC5 (via ANK repeats) in a homotetrameric ion channel; the interaction is direct and activates the channel activity. Post-translationally, (Microbial infection) Deamidated at Gln-204 by Photorhabdus asymbiotica toxin PAU_02230, blocking GTP hydrolysis of heterotrimeric GNAQ or GNA11 and G-alphai (GNAI1, GNAI2 or GNAI3) proteins, thereby activating RhoA.

The protein localises to the cytoplasm. Its subcellular location is the cell membrane. It is found in the cytoskeleton. It localises to the microtubule organizing center. The protein resides in the centrosome. In terms of biological role, heterotrimeric guanine nucleotide-binding proteins (G proteins) function as transducers downstream of G protein-coupled receptors (GPCRs) in numerous signaling cascades. The alpha chain contains the guanine nucleotide binding site and alternates between an active, GTP-bound state and an inactive, GDP-bound state. Signaling by an activated GPCR promotes GDP release and GTP binding. The alpha subunit has a low GTPase activity that converts bound GTP to GDP, thereby terminating the signal. Both GDP release and GTP hydrolysis are modulated by numerous regulatory proteins. Signaling is mediated via effector proteins, such as adenylate cyclase. Inhibits adenylate cyclase activity, leading to decreased intracellular cAMP levels. Stimulates the activity of receptor-regulated K(+) channels. The active GTP-bound form prevents the association of RGS14 with centrosomes and is required for the translocation of RGS14 from the cytoplasm to the plasma membrane. May play a role in cell division. The active GTP-bound form activates the calcium permeant TRPC5 ion channels. In Homo sapiens (Human), this protein is Guanine nucleotide-binding protein G(i) subunit alpha-3 (GNAI3).